We begin with the raw amino-acid sequence, 441 residues long: Carbohydrate sulfotransferase 3 (441 aa).

The Cytoplasmic segment spans residues 1 to 4; that stretch reads MKMR. The helical; Signal-anchor for type II membrane protein transmembrane segment at 5 to 21 threads the bilayer; it reads SKYAIILFFVVALVIIE. The Lumenal portion of the chain corresponds to 22–441; the sequence is KERNIISRVS…LLENRNFWIT (420 aa). Residues Asn47 and Asn58 are each glycosylated (N-linked (GlcNAc...) asparagine). 106–112 is a 3'-phosphoadenylyl sulfate binding site; sequence TRTGSSF. An N-linked (GlcNAc...) asparagine glycan is attached at Asn221. 266–274 is a 3'-phosphoadenylyl sulfate binding site; that stretch reads RDPRAVLAS. The N-linked (GlcNAc...) asparagine glycan is linked to Asn427.

The protein belongs to the sulfotransferase 1 family. Gal/GlcNAc/GalNAc subfamily. N-glycosylated. In terms of tissue distribution, in electric organ, it is moderately expressed in spinal cord and electric lobe and undetectable in non-neural tissues. Expressed in a punctate distribution in the innervated portion of electrocytes. In the CNS, it is localized within the somas of motor neurons and neurons of the electromotor nucleus.

The protein localises to the golgi apparatus membrane. The enzyme catalyses chondroitin beta-D-glucuronate + n 3'-phosphoadenylyl sulfate = chondroitin 6'-sulfate + n adenosine 3',5'-bisphosphate + n H(+). It carries out the reaction 3'-phosphoadenylyl sulfate + keratan = adenosine 3',5'-bisphosphate + keratan 6'-sulfate.. In terms of biological role, sulfotransferase that utilizes 3'-phospho-5'-adenylyl sulfate (PAPS) as sulfonate donor to catalyze the transfer of sulfate to position 6 of the N-acetylgalactosamine (GalNAc) residue of chondroitin. Chondroitin sulfate constitutes the predominant proteoglycan present in cartilage and is distributed on the surfaces of many cells and extracellular matrices. Catalyzes with a lower efficiency the sulfation of Gal residues of keratan sulfate, another glycosaminoglycan. Can also catalyze the sulfation of the Gal residues in sialyl N-acetyllactosamine (sialyl LacNAc) oligosaccharides. This chain is Carbohydrate sulfotransferase 3 (CHST3), found in Tetronarce californica (Pacific electric ray).